We begin with the raw amino-acid sequence, 525 residues long: MEKESENASCAGLLGQKNEPGSPTQSRSGKHKLSVCSKICFAIGGAPYQITGCALGFFLQIFLLDIAQVPPFYASIILFSGRVWDAITDPLVGFFVSKSSWTRLGRLLPWVVFSTPFAVVSYLLIWFVPGFSGVSMVIWYLVFYCLFQTLVTCFHVPYSALTMFISKEQSDRDSATGYRMTVEVLGTVLGTAIQGQIVGRENTPCVEHIRETHLYNTSVIMEDLNITHDVESLSSTRDAYMIAAGVICAIYVLCAIILTLGVREKRDAYELLSDQPFSFWQGLKLVMSHKPYIKLITGFLFTSLAFMLLEGNFALFLTYTMGFRRDFQNILLVVMLSATLTVPFWQWFLTRFGKKTAVYFGISSVIPFLILVVLMESNLILAYVVAVAAGLSVAAAFLLPWSMLPDVIDDFILKNPDSHGHEPIFFSFYVFFTKFASGVSLGISTLSLDFAGYQTRACSQPEQVNLTLKMLICVAPVILILLGLLLFILYPINEEKRKQNKKALQLIRESNRDSDSDSLELASNV.

The tract at residues M1–G29 is disordered. Residues M1–K32 lie on the Cytoplasmic side of the membrane. Residues L33–F62 traverse the membrane as a helical segment. Over L63–Y73 the chain is Extracellular. The helical transmembrane segment at A74–F94 threads the bilayer. Residues F95–R106 lie on the Cytoplasmic side of the membrane. A helical membrane pass occupies residues L107–W126. Residues F127–V137 lie on the Extracellular side of the membrane. A helical transmembrane segment spans residues I138–T162. The Cytoplasmic portion of the chain corresponds to M163 to Q169. A helical membrane pass occupies residues S170–E201. At N202–I226 the chain is on the extracellular side. An intrachain disulfide couples C205 to C458. 2 N-linked (GlcNAc...) asparagine glycosylation sites follow: N216 and N225. The helical transmembrane segment at T227 to L260 threads the bilayer. Residues G261–P291 are Cytoplasmic-facing. The helical transmembrane segment at Y292–T318 threads the bilayer. Residues Y319–N329 lie on the Extracellular side of the membrane. Residues I330–F348 form a helical membrane-spanning segment. Topologically, residues L349 to F352 are cytoplasmic. The helical transmembrane segment at G353–L374 threads the bilayer. The Extracellular portion of the chain corresponds to M375–S377. The helical transmembrane segment at N378 to K414 threads the bilayer. Residues N415–I424 are Cytoplasmic-facing. A helical transmembrane segment spans residues F425–A451. Residues G452–Q463 lie on the Extracellular side of the membrane. Residues V464–F487 form a helical membrane-spanning segment. Residues I488–V525 lie on the Cytoplasmic side of the membrane.

Belongs to the major facilitator superfamily.

Its subcellular location is the cell membrane. It is found in the endoplasmic reticulum membrane. It carries out the reaction a 1-acyl-sn-glycero-3-phosphocholine(in) + Na(+)(in) = a 1-acyl-sn-glycero-3-phosphocholine(out) + Na(+)(out). The enzyme catalyses 1-(4Z,7Z,10Z,13Z,16Z,19Z-docosahexaenoyl)-sn-glycero-3-phosphocholine(in) + Na(+)(in) = 1-(4Z,7Z,10Z,13Z,16Z,19Z-docosahexaenoyl)-sn-glycero-3-phosphocholine(out) + Na(+)(out). It catalyses the reaction 1-(9Z-octadecenoyl)-sn-glycero-3-phosphocholine(in) + Na(+)(in) = 1-(9Z-octadecenoyl)-sn-glycero-3-phosphocholine(out) + Na(+)(out). The catalysed reaction is 1-hexadecanoyl-sn-glycero-3-phosphocholine(in) + Na(+)(in) = 1-hexadecanoyl-sn-glycero-3-phosphocholine(out) + Na(+)(out). It carries out the reaction a 1-acyl-sn-glycero-3-phosphoethanolamine(in) + Na(+)(in) = a 1-acyl-sn-glycero-3-phosphoethanolamine(out) + Na(+)(out). Sodium-dependent lysophosphatidylcholine (LPC) symporter, which plays an essential role for blood-brain barrier formation and function. Specifically expressed in endothelium of the blood-brain barrier of micro-vessels and transports LPC into the brain. Transport of LPC is essential because it constitutes the major mechanism by which docosahexaenoic acid (DHA), an omega-3 fatty acid that is essential for normal brain growth and cognitive function, enters the brain. Transports LPC carrying long-chain fatty acids such LPC oleate and LPC palmitate with a minimum acyl chain length of 14 carbons. Does not transport docosahexaenoic acid in unesterified fatty acid. In Xenopus tropicalis (Western clawed frog), this protein is Sodium-dependent lysophosphatidylcholine symporter 1 (mfsd2a).